The primary structure comprises 100 residues: Apolipoprotein C-II (100 aa).

The N-terminal stretch at 1–22 (MGSRFLLALFLILLVLGCEVQA) is a signal peptide. Residues 66-74 (SVDEKLRDM) form a lipid binding region. Positions 78-100 (SSAAMTTYASIFTDQILTLLKGE) are lipoprotein lipase cofactor.

It belongs to the apolipoprotein C2 family. Proapolipoprotein C-II is synthesized as a sialic acid containing glycoprotein which is subsequently desialylated prior to its proteolytic processing. Post-translationally, proapolipoprotein C-II, the major form found in plasma undergoes proteolytic cleavage of its N-terminal hexapeptide to generate the mature form apolipoprotein C-II, which occurs as the minor form in plasma.

It localises to the secreted. Its function is as follows. Component of chylomicrons, very low-density lipoproteins (VLDL), low-density lipoproteins (LDL), and high-density lipoproteins (HDL) in plasma. Plays an important role in lipoprotein metabolism as an activator of lipoprotein lipase. This Microtus ochrogaster (Prairie vole) protein is Apolipoprotein C-II (APOC2).